We begin with the raw amino-acid sequence, 352 residues long: Uricase (352 aa).

The disordered stretch occupies residues 1-32 (MFATPLRQPAAANHQTPKNSAGMDEHGKPYQY). The segment covering 23–32 (MDEHGKPYQY) has biased composition (basic and acidic residues). Residues K41 and T86 each act as charge relay system in the active site. T86, D87, F214, R231, V279, Q280, and N306 together coordinate urate. H308 (charge relay system) is an active-site residue. The Microbody targeting signal signature appears at 350-352 (SHL).

It belongs to the uricase family. Malpighian tubules.

It is found in the peroxisome. It catalyses the reaction urate + O2 + H2O = 5-hydroxyisourate + H2O2. It participates in purine metabolism; urate degradation; (S)-allantoin from urate: step 1/3. Repressed by 20-hydroxyecdysone. Catalyzes the oxidation of uric acid to 5-hydroxyisourate, which is further processed to form (S)-allantoin. The protein is Uricase (Uro) of Drosophila melanogaster (Fruit fly).